Reading from the N-terminus, the 378-residue chain is Histone deacetylase 8 (378 aa).

Positions 15–325 (RSVVYVYSPE…WTYLTGTVLG (311 aa)) are histone deacetylase. Asp-102 is a binding site for substrate. The Proton acceptor role is filled by His-144. Gly-152 is a substrate binding site. Asp-179, His-181, and Asp-268 together coordinate a divalent metal cation. Residue Tyr-307 coordinates substrate.

It belongs to the histone deacetylase family. HD type 1 subfamily. A divalent metal cation is required as a cofactor.

The protein resides in the nucleus. It localises to the chromosome. It is found in the cytoplasm. It carries out the reaction N(6)-acetyl-L-lysyl-[histone] + H2O = L-lysyl-[histone] + acetate. The catalysed reaction is N(6)-acetyl-L-lysyl-[protein] + H2O = L-lysyl-[protein] + acetate. The enzyme catalyses N(6)-(2E)-butenoyl-L-lysyl-[protein] + H2O = (2E)-2-butenoate + L-lysyl-[protein]. Its activity is regulated as follows. Its activity is inhibited by trichostatin A (TSA) and butyrate, 2 well known histone deacetylase inhibitors. Histone deacetylase that catalyzes the deacetylation of lysine residues on the N-terminal part of the core histones (H2A, H2B, H3 and H4). Histone deacetylation gives a tag for epigenetic repression and plays an important role in transcriptional regulation, cell cycle progression and developmental events. Histone deacetylases act via the formation of large multiprotein complexes. Also involved in the deacetylation of non-histone proteins. In addition to protein deacetylase activity, also has protein-lysine deacylase activity: acts as a protein decrotonylase by mediating decrotonylation ((2E)-butenoyl) of histones. The sequence is that of Histone deacetylase 8 (hdac8) from Danio rerio (Zebrafish).